The primary structure comprises 280 residues: 23S rRNA (guanine(748)-N(1))-methyltransferase (280 aa).

Cys11, Cys14, Cys27, and His31 together coordinate Zn(2+). S-adenosyl-L-methionine is bound by residues Tyr70, 100-101, and His188; that span reads TG.

It belongs to the methyltransferase superfamily. RlmA family.

The catalysed reaction is guanosine(748) in 23S rRNA + S-adenosyl-L-methionine = N(1)-methylguanosine(748) in 23S rRNA + S-adenosyl-L-homocysteine + H(+). Its function is as follows. Specifically methylates the guanosine in position 748 of 23S rRNA. Confers resistance to the macrolide antibiotic tylosine. This is 23S rRNA (guanine(748)-N(1))-methyltransferase (rlmAII) from Streptomyces fradiae (Streptomyces roseoflavus).